An 810-amino-acid chain; its full sequence is Protein kinase C-binding protein NELL1 (810 aa).

An N-terminal signal peptide occupies residues 1–21 (MPMDVILVLWFCVCTARTVLG). N-linked (GlcNAc...) asparagine glycans are attached at residues Asn-40, Asn-53, Asn-83, Asn-224, Asn-294, and Asn-372. The 171-residue stretch at 57 to 227 (AFLFQDVQRE…TQCPNLNRTC (171 aa)) folds into the Laminin G-like domain. The region spanning 271-332 (KTCQVSGLLY…ISGQCCKVCR (62 aa)) is the VWFC 1 domain. Cystine bridges form between Cys-395–Cys-407, Cys-401–Cys-416, and Cys-418–Cys-432. The Ca(2+) site is built by Asp-434, Ile-435, and Glu-437. An EGF-like 1; calcium-binding domain is found at 434-475 (DIDECAAKMHYCHANTVCVNLPGLYRCDCIPGYIRVDDFSCT). Cystine bridges form between Cys-438–Cys-451, Cys-445–Cys-460, Cys-462–Cys-474, Cys-480–Cys-493, Cys-487–Cys-502, Cys-504–Cys-515, Cys-519–Cys-529, Cys-523–Cys-535, Cys-537–Cys-546, Cys-553–Cys-566, Cys-560–Cys-575, Cys-577–Cys-594, Cys-600–Cys-613, Cys-607–Cys-622, and Cys-624–Cys-630. Asn-453, Leu-454, and Leu-457 together coordinate Ca(2+). Residues 476 to 516 (EHDDCGSGQHNCDKNAICTNTVQGHSCTCQPGYVGNGTVCK) form the EGF-like 2; calcium-binding domain. Asn-511 carries N-linked (GlcNAc...) asparagine glycosylation. In terms of domain architecture, EGF-like 3 spans 517–547 (AFCEEGCRYGGTCVAPNKCVCPSGFTGSHCE). The EGF-like 4; calcium-binding domain occupies 549–587 (DIDECAEGFVECHNHSRCVNLPGWYHCECRSGFHDDGTY). Asn-562 carries an N-linked (GlcNAc...) asparagine glycan. In terms of domain architecture, EGF-like 5; calcium-binding spans 596 to 631 (DIDECALRTHTCWNDSACINLAGGFDCLCPSGPSCS). The N-linked (GlcNAc...) asparagine glycan is linked to Asn-609. VWFC domains lie at 632 to 687 (GDCP…PECD) and 692 to 750 (SQCL…PRCV). Asn-708 carries N-linked (GlcNAc...) asparagine glycosylation.

As to quaternary structure, homotrimer. Binds to PKC beta-1. Interacts with ATRAID; the interaction promotes osteoblast cell differentiation and mineralization. Interacts with ROBO3.

Its subcellular location is the cytoplasm. It is found in the nucleus envelope. The protein localises to the secreted. In terms of biological role, plays a role in the control of cell growth and differentiation. Promotes osteoblast cell differentiation and terminal mineralization. The protein is Protein kinase C-binding protein NELL1 (Nell1) of Mus musculus (Mouse).